A 113-amino-acid chain; its full sequence is UPF0060 membrane protein Mmcs_2513 (113 aa).

A run of 4 helical transmembrane segments spans residues 12-32, 37-57, 66-86, and 92-112; these read ALFVLAALLEIGGAWLVWQGV, GWIWAGAGVIALGAYGFVAAF, ILAAYGGVFVAGSLLWGVVVD, and RWDLTGALVCLVGVGLIMYAP.

The protein belongs to the UPF0060 family.

It is found in the cell membrane. This Mycobacterium sp. (strain MCS) protein is UPF0060 membrane protein Mmcs_2513.